The primary structure comprises 158 residues: 2-C-methyl-D-erythritol 2,4-cyclodiphosphate synthase (158 aa).

Residues D9 and H11 each contribute to the a divalent metal cation site. Residues 9–11 (DVH) and 35–36 (HS) contribute to the 4-CDP-2-C-methyl-D-erythritol 2-phosphate site. H43 is an a divalent metal cation binding site. 4-CDP-2-C-methyl-D-erythritol 2-phosphate contacts are provided by residues 57–59 (DIG), 62–66 (FPDTD), 101–107 (AQAPKMA), 133–136 (TTTE), F140, and R143.

This sequence belongs to the IspF family. Homotrimer. A divalent metal cation is required as a cofactor.

The catalysed reaction is 4-CDP-2-C-methyl-D-erythritol 2-phosphate = 2-C-methyl-D-erythritol 2,4-cyclic diphosphate + CMP. It participates in isoprenoid biosynthesis; isopentenyl diphosphate biosynthesis via DXP pathway; isopentenyl diphosphate from 1-deoxy-D-xylulose 5-phosphate: step 4/6. Functionally, involved in the biosynthesis of isopentenyl diphosphate (IPP) and dimethylallyl diphosphate (DMAPP), two major building blocks of isoprenoid compounds. Catalyzes the conversion of 4-diphosphocytidyl-2-C-methyl-D-erythritol 2-phosphate (CDP-ME2P) to 2-C-methyl-D-erythritol 2,4-cyclodiphosphate (ME-CPP) with a corresponding release of cytidine 5-monophosphate (CMP). The chain is 2-C-methyl-D-erythritol 2,4-cyclodiphosphate synthase from Vibrio vulnificus (strain YJ016).